Reading from the N-terminus, the 224-residue chain is Peroxiredoxin-6 (224 aa).

The Thioredoxin domain maps to Leu5–Leu169. The required and sufficient for targeting to lysosomes and lamellar bodies stretch occupies residues Asp31 to Pro40. Residue Thr44 is modified to Phosphothreonine. Cys47 serves as the catalytic Cysteine sulfenic acid (-SOH) intermediate; for peroxidase activity. An N6-acetyllysine modification is found at Lys63. A Phosphotyrosine modification is found at Tyr89. Asp140 functions as the For phospholipase activity in the catalytic mechanism. At Thr177 the chain carries Phosphothreonine; by MAPK. An N6-acetyllysine; alternate modification is found at Lys209. N6-succinyllysine; alternate is present on Lys209.

The protein belongs to the peroxiredoxin family. Prx6 subfamily. Homodimer. Interacts with GSTP1; mediates PRDX6 glutathionylation and regeneration. Interacts with APEX1. Interacts with STH. May interact with FAM168B. May interact with HTR2A. Irreversibly inactivated by overoxidation of Cys-47 to sulfinic acid (Cys-SO(2)H) and sulfonic acid (Cys-SO(3)H) forms upon oxidative stress. In terms of processing, phosphorylation at Thr-177 by MAP kinases increases the phospholipase activity of the enzyme. The phosphorylated form exhibits a greater lysophosphatidylcholine acyltransferase activity compared to the non-phosphorylated form.

The protein localises to the cytoplasm. It localises to the lysosome. The enzyme catalyses a hydroperoxide + 2 glutathione = an alcohol + glutathione disulfide + H2O. It carries out the reaction a 1,2-diacyl-sn-glycero-3-phosphocholine + H2O = a 1-acyl-sn-glycero-3-phosphocholine + a fatty acid + H(+). The catalysed reaction is a 1-acyl-sn-glycero-3-phosphocholine + an acyl-CoA = a 1,2-diacyl-sn-glycero-3-phosphocholine + CoA. It catalyses the reaction 1-hexadecanoyl-sn-glycero-3-phosphocholine + hexadecanoyl-CoA = 1,2-dihexadecanoyl-sn-glycero-3-phosphocholine + CoA. The enzyme catalyses 1,2-dihexadecanoyl-sn-glycero-3-phosphocholine + H2O = 1-hexadecanoyl-sn-glycero-3-phosphocholine + hexadecanoate + H(+). Thiol-specific peroxidase that catalyzes the reduction of hydrogen peroxide and organic hydroperoxides to water and alcohols, respectively. Can reduce H(2)O(2) and short chain organic, fatty acid, and phospholipid hydroperoxides. Also has phospholipase activity, and can therefore either reduce the oxidized sn-2 fatty acyl group of phospholipids (peroxidase activity) or hydrolyze the sn-2 ester bond of phospholipids (phospholipase activity). These activities are dependent on binding to phospholipids at acidic pH and to oxidized phospholipds at cytosolic pH. Plays a role in cell protection against oxidative stress by detoxifying peroxides and in phospholipid homeostasis. Exhibits acyl-CoA-dependent lysophospholipid acyltransferase which mediates the conversion of lysophosphatidylcholine (1-acyl-sn-glycero-3-phosphocholine or LPC) into phosphatidylcholine (1,2-diacyl-sn-glycero-3-phosphocholine or PC). Shows a clear preference for LPC as the lysophospholipid and for palmitoyl CoA as the fatty acyl substrate. The protein is Peroxiredoxin-6 (PRDX6) of Pongo abelii (Sumatran orangutan).